We begin with the raw amino-acid sequence, 87 residues long: Putative regulatory protein ABC2323 (87 aa).

Belongs to the RemA family.

The polypeptide is Putative regulatory protein ABC2323 (Shouchella clausii (strain KSM-K16) (Alkalihalobacillus clausii)).